The following is a 276-amino-acid chain: Dermonecrotic toxin LspiSicTox-betaIE4ii (276 aa).

Histidine 5 is a catalytic residue. Glutamate 25 and aspartate 27 together coordinate Mg(2+). Histidine 41 (nucleophile) is an active-site residue. Cystine bridges form between cysteine 45-cysteine 51 and cysteine 47-cysteine 189. Aspartate 85 serves as a coordination point for Mg(2+).

This sequence belongs to the arthropod phospholipase D family. Class II subfamily. The cofactor is Mg(2+). As to expression, expressed by the venom gland.

It is found in the secreted. It carries out the reaction an N-(acyl)-sphingosylphosphocholine = an N-(acyl)-sphingosyl-1,3-cyclic phosphate + choline. It catalyses the reaction an N-(acyl)-sphingosylphosphoethanolamine = an N-(acyl)-sphingosyl-1,3-cyclic phosphate + ethanolamine. The catalysed reaction is a 1-acyl-sn-glycero-3-phosphocholine = a 1-acyl-sn-glycero-2,3-cyclic phosphate + choline. The enzyme catalyses a 1-acyl-sn-glycero-3-phosphoethanolamine = a 1-acyl-sn-glycero-2,3-cyclic phosphate + ethanolamine. Functionally, dermonecrotic toxins cleave the phosphodiester linkage between the phosphate and headgroup of certain phospholipids (sphingolipid and lysolipid substrates), forming an alcohol (often choline) and a cyclic phosphate. This toxin acts on sphingomyelin (SM). It may also act on ceramide phosphoethanolamine (CPE), lysophosphatidylcholine (LPC) and lysophosphatidylethanolamine (LPE), but not on lysophosphatidylserine (LPS), and lysophosphatidylglycerol (LPG). It acts by transphosphatidylation, releasing exclusively cyclic phosphate products as second products. Induces dermonecrosis, hemolysis, increased vascular permeability, edema, inflammatory response, and platelet aggregation. This chain is Dermonecrotic toxin LspiSicTox-betaIE4ii, found in Loxosceles spinulosa (Recluse spider).